A 214-amino-acid chain; its full sequence is Adenylate kinase (214 aa).

An ATP-binding site is contributed by 10–15 (GAGKGT). The NMP stretch occupies residues 30–59 (STGDLLREEIANNTELGKQAKKLIDGGNLV). AMP contacts are provided by residues threonine 31, arginine 36, 57–59 (NLV), 83–86 (GFPR), and glutamine 90. Positions 124 to 161 (LRRQCKNCGNIFNLRFIKNFDGKCPKCGSTDIYQRADD) are LID. Arginine 125 provides a ligand contact to ATP. Residues cysteine 128 and cysteine 131 each coordinate Zn(2+). 134 to 135 (IF) contributes to the ATP binding site. Residues cysteine 147 and cysteine 150 each contribute to the Zn(2+) site. Arginine 158 and arginine 169 together coordinate AMP. Position 197 (lysine 197) interacts with ATP.

This sequence belongs to the adenylate kinase family. In terms of assembly, monomer.

The protein resides in the cytoplasm. It carries out the reaction AMP + ATP = 2 ADP. The protein operates within purine metabolism; AMP biosynthesis via salvage pathway; AMP from ADP: step 1/1. Catalyzes the reversible transfer of the terminal phosphate group between ATP and AMP. Plays an important role in cellular energy homeostasis and in adenine nucleotide metabolism. The chain is Adenylate kinase from Elusimicrobium minutum (strain Pei191).